The following is a 798-amino-acid chain: Vacuolar protein sorting-associated protein 53 homolog (798 aa).

It belongs to the VPS53 family. In terms of assembly, component of the Golgi-associated retrograde protein (GARP) complex, also called VFT (VPS fifty-three) complex, composed of vps-51, vps-52, vps-53 and vps-54. Within the complex interacts with vps-51, vps-52 and vps-54. As to expression, ubiquitously expressed, with particularly strong expression in neuronal cells. Specifically expressed in head and tail neurons and in the pharynx and ventral cord motor neurons.

The protein resides in the golgi apparatus. It is found in the trans-Golgi network membrane. Its subcellular location is the endosome membrane. It localises to the perikaryon. The protein localises to the cytoplasm. The protein resides in the perinuclear region. Functionally, acts as a component of the GARP complex that is involved in retrograde transport from early and late endosomes to the trans-Golgi network (TGN). The GARP complex facilitates tethering as well as SNARE complex assembly at the Golgi. Plays a role in the trafficking of cargo to dense-core vesicles, probably through association with the EARP-interacting protein eipr-1. Important for neuronal function. The sequence is that of Vacuolar protein sorting-associated protein 53 homolog from Caenorhabditis elegans.